The following is a 287-amino-acid chain: Endolytic peptidoglycan transglycosylase RlpA (287 aa).

The N-terminal stretch at 1 to 25 (MKLKTGLNLTALLLFMISVAFPAQA) is a signal peptide. The region spanning 209–284 (LKGTEFYCLK…ANNKPLIVYT (76 aa)) is the SPOR domain.

This sequence belongs to the RlpA family.

Functionally, lytic transglycosylase with a strong preference for naked glycan strands that lack stem peptides. The chain is Endolytic peptidoglycan transglycosylase RlpA from Haemophilus influenzae (strain ATCC 51907 / DSM 11121 / KW20 / Rd).